The chain runs to 185 residues: Ribosome-recycling factor (185 aa).

The disordered stretch occupies residues 137-162; sequence DSIDKMVKDGEVGEDEGRRAEKELDD.

Belongs to the RRF family.

Its subcellular location is the cytoplasm. Functionally, responsible for the release of ribosomes from messenger RNA at the termination of protein biosynthesis. May increase the efficiency of translation by recycling ribosomes from one round of translation to another. The polypeptide is Ribosome-recycling factor (Streptomyces coelicolor (strain ATCC BAA-471 / A3(2) / M145)).